Consider the following 396-residue polypeptide: Enoyl-[acyl-carrier-protein] reductase [NADH] (396 aa).

Residues 48-53 (GASTGY), 74-75 (FE), 111-112 (DA), and 139-140 (LA) each bind NAD(+). Tyr-225 is a substrate binding site. Tyr-235 acts as the Proton donor in catalysis. NAD(+)-binding positions include Lys-244 and 273 to 275 (VVT).

It belongs to the TER reductase family. In terms of assembly, monomer.

It catalyses the reaction a 2,3-saturated acyl-[ACP] + NAD(+) = a (2E)-enoyl-[ACP] + NADH + H(+). The protein operates within lipid metabolism; fatty acid biosynthesis. In terms of biological role, involved in the final reduction of the elongation cycle of fatty acid synthesis (FAS II). Catalyzes the reduction of a carbon-carbon double bond in an enoyl moiety that is covalently linked to an acyl carrier protein (ACP). The chain is Enoyl-[acyl-carrier-protein] reductase [NADH] from Colwellia psychrerythraea (strain 34H / ATCC BAA-681) (Vibrio psychroerythus).